The sequence spans 422 residues: Elongation factor 1-alpha (422 aa).

Positions 5-221 constitute a tr-type G domain; that stretch reads KPHMNLAVIG…NNLKVPEKPS (217 aa). Residues 14–21 form a G1 region; the sequence is GHIDHGKS. 14–21 contributes to the GTP binding site; it reads GHIDHGKS. Mg(2+) is bound at residue Ser-21. The interval 70–74 is G2; sequence GITID. Residues 91 to 94 are G3; it reads DCPG. Residues 91 to 95 and 146 to 149 each bind GTP; these read DCPGH and NKMD. The segment at 146-149 is G4; the sequence is NKMD. Residues 185–187 are G5; sequence SAF.

Belongs to the TRAFAC class translation factor GTPase superfamily. Classic translation factor GTPase family. EF-Tu/EF-1A subfamily.

The protein localises to the cytoplasm. It catalyses the reaction GTP + H2O = GDP + phosphate + H(+). Functionally, GTP hydrolase that promotes the GTP-dependent binding of aminoacyl-tRNA to the A-site of ribosomes during protein biosynthesis. The protein is Elongation factor 1-alpha of Methanosarcina barkeri (strain Fusaro / DSM 804).